The sequence spans 375 residues: Ubl carboxyl-terminal hydrolase 18 (375 aa).

The disordered stretch occupies residues 18–45 (ESPQSPADLEEKKEEDSNMKREQPRERP). Residues 26 to 45 (LEEKKEEDSNMKREQPRERP) show a composition bias toward basic and acidic residues. In terms of domain architecture, USP spans 55 to 373 (VGLHNIGQTC…TAYLLVYMKM (319 aa)). Cysteine 64 functions as the Nucleophile in the catalytic mechanism. The active-site Proton acceptor is the histidine 321.

Belongs to the peptidase C19 family. As to quaternary structure, interacts with STAT2; the interaction is direct. Interacts with IFNAR2; indirectly via STAT2, it negatively regulates the assembly of the ternary interferon-IFNAR1-IFNAR2 complex and inhibits type I interferon signaling. Interacts with STING1. Interacts with USP20.

The catalysed reaction is Thiol-dependent hydrolysis of ester, thioester, amide, peptide and isopeptide bonds formed by the C-terminal Gly of ubiquitin (a 76-residue protein attached to proteins as an intracellular targeting signal).. In terms of biological role, interferon-induced ISG15-specific protease that plays a crucial role for maintaining a proper balance of ISG15-conjugated proteins in cells. Regulates protein ISGylation by efficiently cleaving ISG15 conjugates linked via isopeptide bonds. Regulates T-cell activation and T-helper 17 (Th17) cell differentiation by deubiquitinating TAK1, likely to keep TAK1-TAB complexes in steady conditions. In turn, restricts activation of NF-kappa-B, NFAT, and JNK as well as expression of IL2 in T-cells after TCR activation. Acts as a molecular adapter with USP20 to promote innate antiviral response through deubiquitinating STING1. Involved also in the negative regulation of the inflammatory response triggered by type I interferon. Upon recruitment by STAT2 to the type I interferon receptor subunit IFNAR2 interferes with the assembly of the ternary interferon-IFNAR1-IFNAR2 complex and acts as a negative regulator of the type I interferon signaling pathway. The protein is Ubl carboxyl-terminal hydrolase 18 (USP18) of Pongo abelii (Sumatran orangutan).